A 245-amino-acid polypeptide reads, in one-letter code: tRNA (guanine-N(1)-)-methyltransferase (245 aa).

Residues Gly-114 and 134 to 139 (IGDYIL) each bind S-adenosyl-L-methionine.

This sequence belongs to the RNA methyltransferase TrmD family. In terms of assembly, homodimer.

The protein resides in the cytoplasm. It catalyses the reaction guanosine(37) in tRNA + S-adenosyl-L-methionine = N(1)-methylguanosine(37) in tRNA + S-adenosyl-L-homocysteine + H(+). Specifically methylates guanosine-37 in various tRNAs. The polypeptide is tRNA (guanine-N(1)-)-methyltransferase (Listeria monocytogenes serotype 4b (strain CLIP80459)).